Reading from the N-terminus, the 118-residue chain is Small ribosomal subunit protein uS13 (118 aa).

The tract at residues 94–118 is disordered; it reads SLPLRGQRTKTNARTRKGPRKAIKK.

Belongs to the universal ribosomal protein uS13 family. Part of the 30S ribosomal subunit. Forms a loose heterodimer with protein S19. Forms two bridges to the 50S subunit in the 70S ribosome.

Its function is as follows. Located at the top of the head of the 30S subunit, it contacts several helices of the 16S rRNA. In the 70S ribosome it contacts the 23S rRNA (bridge B1a) and protein L5 of the 50S subunit (bridge B1b), connecting the 2 subunits; these bridges are implicated in subunit movement. Contacts the tRNAs in the A and P-sites. This is Small ribosomal subunit protein uS13 from Pseudoalteromonas atlantica (strain T6c / ATCC BAA-1087).